The chain runs to 368 residues: Branched-chain-amino-acid aminotransferase (368 aa).

Arg-101 contributes to the pyridoxal 5'-phosphate binding site. Lys-204 carries the post-translational modification N6-(pyridoxal phosphate)lysine. Pyridoxal 5'-phosphate is bound by residues Tyr-209, Ile-271–Thr-272, and Thr-314.

Belongs to the class-IV pyridoxal-phosphate-dependent aminotransferase family. As to quaternary structure, homodimer. Pyridoxal 5'-phosphate is required as a cofactor.

The catalysed reaction is L-leucine + 2-oxoglutarate = 4-methyl-2-oxopentanoate + L-glutamate. It catalyses the reaction L-isoleucine + 2-oxoglutarate = (S)-3-methyl-2-oxopentanoate + L-glutamate. The enzyme catalyses L-valine + 2-oxoglutarate = 3-methyl-2-oxobutanoate + L-glutamate. It participates in amino-acid biosynthesis; L-isoleucine biosynthesis; L-isoleucine from 2-oxobutanoate: step 4/4. It functions in the pathway amino-acid biosynthesis; L-leucine biosynthesis; L-leucine from 3-methyl-2-oxobutanoate: step 4/4. The protein operates within amino-acid biosynthesis; L-valine biosynthesis; L-valine from pyruvate: step 4/4. Its function is as follows. Catalyzes the reversible transfers of an amino group from glutamate to the alpha-ketoacid of the respective amino acid in the final step in the biosynthesis of branchedchain amino acids. This chain is Branched-chain-amino-acid aminotransferase (ilvE), found in Mycobacterium tuberculosis (strain CDC 1551 / Oshkosh).